The sequence spans 224 residues: Dehydration-responsive element-binding protein 1G (224 aa).

The span at 1-16 shows a compositional bias: polar residues; that stretch reads MDVSAALSSDYSSGTP. The segment at 1-46 is disordered; it reads MDVSAALSSDYSSGTPSPVAADADDGSSAYMTVSSAPPKRRAGRTK. Positions 54-111 form a DNA-binding region, AP2/ERF; sequence VFKGVRRRNPGRWVCEVREPHGKQRIWLGTFETAEMAARAHDVAALALRGRAACLNFA. Disordered stretches follow at residues 139 to 161 and 200 to 224; these read AFRP…SGAT and PPMA…LWSY.

The protein belongs to the AP2/ERF transcription factor family. ERF subfamily.

Its subcellular location is the nucleus. Its function is as follows. Transcriptional activator that binds specifically to the DNA sequence 5'-[AG]CCGAC-3'. Binding to the C-repeat/DRE element mediates high salinity- and dehydration-inducible transcription. The protein is Dehydration-responsive element-binding protein 1G (DREB1G) of Oryza sativa subsp. japonica (Rice).